The sequence spans 184 residues: ATP synthase subunit b, chloroplastic (184 aa).

Residues 27-49 (LATNPINLSVVLGVLIFFGKGVL) form a helical membrane-spanning segment.

Belongs to the ATPase B chain family. As to quaternary structure, F-type ATPases have 2 components, F(1) - the catalytic core - and F(0) - the membrane proton channel. F(1) has five subunits: alpha(3), beta(3), gamma(1), delta(1), epsilon(1). F(0) has four main subunits: a(1), b(1), b'(1) and c(10-14). The alpha and beta chains form an alternating ring which encloses part of the gamma chain. F(1) is attached to F(0) by a central stalk formed by the gamma and epsilon chains, while a peripheral stalk is formed by the delta, b and b' chains.

The protein localises to the plastid. Its subcellular location is the chloroplast thylakoid membrane. In terms of biological role, f(1)F(0) ATP synthase produces ATP from ADP in the presence of a proton or sodium gradient. F-type ATPases consist of two structural domains, F(1) containing the extramembraneous catalytic core and F(0) containing the membrane proton channel, linked together by a central stalk and a peripheral stalk. During catalysis, ATP synthesis in the catalytic domain of F(1) is coupled via a rotary mechanism of the central stalk subunits to proton translocation. Its function is as follows. Component of the F(0) channel, it forms part of the peripheral stalk, linking F(1) to F(0). The polypeptide is ATP synthase subunit b, chloroplastic (Oenothera argillicola (Appalachian evening primrose)).